The primary structure comprises 359 residues: GalNAc-alpha-(1-&gt;4)-GalNAc-alpha-(1-&gt;3)-diNAcBac-PP-undecaprenol alpha-1,4-N-acetyl-D-galactosaminyltransferase (359 aa).

Residue glutamate 17 coordinates substrate. Tyrosine 45 contributes to the UDP-N-acetyl-alpha-D-galactosamine binding site. 71–74 (RFKK) is a substrate binding site. Residues histidine 117, arginine 190, lysine 195, valine 246, and 266 to 274 (EGLPTVLIE) each bind UDP-N-acetyl-alpha-D-galactosamine. Position 190 (arginine 190) interacts with substrate.

The protein belongs to the glycosyltransferase group 1 family.

It localises to the cell inner membrane. It catalyses the reaction N-acetyl-alpha-D-galactosaminyl-(1-&gt;4)-N-acetyl-alpha-D-galactosaminyl-(1-&gt;3)-N,N'-diacetyl-alpha-D-bacillosaminyl-tri-trans,heptacis-undecaprenyl diphosphate + 3 UDP-N-acetyl-alpha-D-galactosamine = [alpha-D-GalNAc-(1-&gt;4)]4-alpha-D-GalNAc-(1-&gt;3)-alpha-D-diNAcBac-tri-trans,hepta-cis-undecaprenyl diphosphate + 3 UDP + 3 H(+). It participates in protein modification; protein glycosylation. Its function is as follows. Processive glycosyltransferase that is part of the biosynthetic pathway of the lipid-linked oligosaccharide (LLO) that serves as the glycan donor in bacterial protein N-glycosylation. Catalyzes the transfer of exactly three alpha-(1-&gt;4)-N-acetylgalactosamine (GalNAc) units to the growing LLO precursor, GalNAc-alpha-(1-&gt;4)-GalNAc-alpha-(1-&gt;3)-diNAcBac-PP-undecaprenyl. Cannot accept UDP-GlcNAc as substrate. This is GalNAc-alpha-(1-&gt;4)-GalNAc-alpha-(1-&gt;3)-diNAcBac-PP-undecaprenol alpha-1,4-N-acetyl-D-galactosaminyltransferase from Campylobacter jejuni subsp. jejuni serotype O:2 (strain ATCC 700819 / NCTC 11168).